Reading from the N-terminus, the 142-residue chain is Nucleoside diphosphate kinase (142 aa).

ATP-binding residues include K9, F57, R85, T91, R102, and N112. A disordered region spans residues 87 to 106 (AMGATDPAKSEKGTVRGDLG). The active-site Pros-phosphohistidine intermediate is the H115.

It belongs to the NDK family. In terms of assembly, homotetramer. The cofactor is Mg(2+).

The protein localises to the cytoplasm. The enzyme catalyses a 2'-deoxyribonucleoside 5'-diphosphate + ATP = a 2'-deoxyribonucleoside 5'-triphosphate + ADP. It carries out the reaction a ribonucleoside 5'-diphosphate + ATP = a ribonucleoside 5'-triphosphate + ADP. Its function is as follows. Major role in the synthesis of nucleoside triphosphates other than ATP. The ATP gamma phosphate is transferred to the NDP beta phosphate via a ping-pong mechanism, using a phosphorylated active-site intermediate. The sequence is that of Nucleoside diphosphate kinase from Dehalococcoides mccartyi (strain ATCC BAA-2266 / KCTC 15142 / 195) (Dehalococcoides ethenogenes (strain 195)).